Here is a 379-residue protein sequence, read N- to C-terminus: Chaperone protein DnaJ (379 aa).

The J domain maps to 5–70 (DYYEVLGVGK…EKKAAYDQYG (66 aa)). Residues 139–217 (GHEAQIRVPH…CHGQGKLKSQ (79 aa)) form a CR-type zinc finger. Cys152, Cys155, Cys169, Cys172, Cys191, Cys194, Cys205, and Cys208 together coordinate Zn(2+). 4 CXXCXGXG motif repeats span residues 152-159 (CEHCHGNG), 169-176 (CPTCNGVG), 191-198 (CPKCHGSG), and 205-212 (CTKCHGQG).

It belongs to the DnaJ family. Homodimer. Zn(2+) is required as a cofactor.

The protein localises to the cytoplasm. Its function is as follows. Participates actively in the response to hyperosmotic and heat shock by preventing the aggregation of stress-denatured proteins and by disaggregating proteins, also in an autonomous, DnaK-independent fashion. Unfolded proteins bind initially to DnaJ; upon interaction with the DnaJ-bound protein, DnaK hydrolyzes its bound ATP, resulting in the formation of a stable complex. GrpE releases ADP from DnaK; ATP binding to DnaK triggers the release of the substrate protein, thus completing the reaction cycle. Several rounds of ATP-dependent interactions between DnaJ, DnaK and GrpE are required for fully efficient folding. Also involved, together with DnaK and GrpE, in the DNA replication of plasmids through activation of initiation proteins. This chain is Chaperone protein DnaJ, found in Cupriavidus metallidurans (strain ATCC 43123 / DSM 2839 / NBRC 102507 / CH34) (Ralstonia metallidurans).